We begin with the raw amino-acid sequence, 110 residues long: Hydrogenase maturation factor HypA (110 aa).

His2 is a Ni(2+) binding site. The Zn(2+) site is built by Cys70, Cys73, Cys86, and Cys89.

Belongs to the HypA/HybF family.

Its function is as follows. Involved in the maturation of [NiFe] hydrogenases. Required for nickel insertion into the metal center of the hydrogenase. This is Hydrogenase maturation factor HypA from Geotalea daltonii (strain DSM 22248 / JCM 15807 / FRC-32) (Geobacter daltonii).